We begin with the raw amino-acid sequence, 638 residues long: Fructose-1,6-bisphosphatase class 3 (638 aa).

Belongs to the FBPase class 3 family. Mn(2+) serves as cofactor.

The enzyme catalyses beta-D-fructose 1,6-bisphosphate + H2O = beta-D-fructose 6-phosphate + phosphate. It participates in carbohydrate biosynthesis; gluconeogenesis. The sequence is that of Fructose-1,6-bisphosphatase class 3 from Pediococcus pentosaceus (strain ATCC 25745 / CCUG 21536 / LMG 10740 / 183-1w).